The primary structure comprises 110 residues: Nucleoid-associated protein KPK_4227 (110 aa).

Positions 1 to 22 are disordered; that stretch reads MFGGKGGLGNLMKQAQQMQDKM.

This sequence belongs to the YbaB/EbfC family. Homodimer.

It is found in the cytoplasm. The protein localises to the nucleoid. Binds to DNA and alters its conformation. May be involved in regulation of gene expression, nucleoid organization and DNA protection. The polypeptide is Nucleoid-associated protein KPK_4227 (Klebsiella pneumoniae (strain 342)).